Consider the following 483-residue polypeptide: Glutamyl-tRNA(Gln) amidotransferase subunit A (483 aa).

Catalysis depends on charge relay system residues Lys77 and Ser152. Ser176 functions as the Acyl-ester intermediate in the catalytic mechanism.

Belongs to the amidase family. GatA subfamily. As to quaternary structure, heterotrimer of A, B and C subunits.

It catalyses the reaction L-glutamyl-tRNA(Gln) + L-glutamine + ATP + H2O = L-glutaminyl-tRNA(Gln) + L-glutamate + ADP + phosphate + H(+). In terms of biological role, allows the formation of correctly charged Gln-tRNA(Gln) through the transamidation of misacylated Glu-tRNA(Gln) in organisms which lack glutaminyl-tRNA synthetase. The reaction takes place in the presence of glutamine and ATP through an activated gamma-phospho-Glu-tRNA(Gln). The sequence is that of Glutamyl-tRNA(Gln) amidotransferase subunit A from Listeria monocytogenes serovar 1/2a (strain ATCC BAA-679 / EGD-e).